The chain runs to 332 residues: MKAIEWRNNRLIILDQTLLPLEEKYLELNDYHAVAEAIKTLRIRGAPSIGVAAAYGIALGALSIETRYCSEFLPLYQQISAEIASTRPTAKNLFMAVERMDHVVASGTDVLQVKISLVDEALKIHREEEEASRKISTFGADLIQPGWTVLTHCNAGPLATAGYGTALGVIIAAHQQNKGISAFATETRPLLQGARLTALELKEAGVPFKLITDSMAGHFMKKGVINAVVVGADRIARNGDTANKIGTYSLAVLALAHGIPFYVAAPSSTFDKSIESGNDIVIEERKPEEITYLRGQRIAPENIDVANPAFDVTPANLIAAFITENGIIRRGE.

Substrate-binding positions include 44–46 (RGA), Arg-87, and Gln-192. The active-site Proton donor is the Asp-233. 243–244 (NK) is a substrate binding site.

It belongs to the eIF-2B alpha/beta/delta subunits family. MtnA subfamily.

The catalysed reaction is 5-(methylsulfanyl)-alpha-D-ribose 1-phosphate = 5-(methylsulfanyl)-D-ribulose 1-phosphate. Its pathway is amino-acid biosynthesis; L-methionine biosynthesis via salvage pathway; L-methionine from S-methyl-5-thio-alpha-D-ribose 1-phosphate: step 1/6. Functionally, catalyzes the interconversion of methylthioribose-1-phosphate (MTR-1-P) into methylthioribulose-1-phosphate (MTRu-1-P). This Dehalococcoides mccartyi (strain CBDB1) protein is Methylthioribose-1-phosphate isomerase.